The sequence spans 175 residues: ATP synthase subunit delta (175 aa).

It belongs to the ATPase delta chain family. In terms of assembly, F-type ATPases have 2 components, F(1) - the catalytic core - and F(0) - the membrane proton channel. F(1) has five subunits: alpha(3), beta(3), gamma(1), delta(1), epsilon(1). F(0) has three main subunits: a(1), b(2) and c(10-14). The alpha and beta chains form an alternating ring which encloses part of the gamma chain. F(1) is attached to F(0) by a central stalk formed by the gamma and epsilon chains, while a peripheral stalk is formed by the delta and b chains.

It is found in the cell inner membrane. In terms of biological role, f(1)F(0) ATP synthase produces ATP from ADP in the presence of a proton or sodium gradient. F-type ATPases consist of two structural domains, F(1) containing the extramembraneous catalytic core and F(0) containing the membrane proton channel, linked together by a central stalk and a peripheral stalk. During catalysis, ATP synthesis in the catalytic domain of F(1) is coupled via a rotary mechanism of the central stalk subunits to proton translocation. This protein is part of the stalk that links CF(0) to CF(1). It either transmits conformational changes from CF(0) to CF(1) or is implicated in proton conduction. The protein is ATP synthase subunit delta of Xylella fastidiosa (strain M12).